The following is a 446-amino-acid chain: Phosphoglucosamine mutase (446 aa).

Residue Ser101 is the Phosphoserine intermediate of the active site. The Mg(2+) site is built by Ser101, Asp240, Asp242, and Asp244. At Ser101 the chain carries Phosphoserine.

It belongs to the phosphohexose mutase family. Mg(2+) is required as a cofactor. In terms of processing, activated by phosphorylation.

The catalysed reaction is alpha-D-glucosamine 1-phosphate = D-glucosamine 6-phosphate. Functionally, catalyzes the conversion of glucosamine-6-phosphate to glucosamine-1-phosphate. The protein is Phosphoglucosamine mutase of Pseudomonas putida (strain W619).